Reading from the N-terminus, the 477-residue chain is UDP-sulfoquinovose synthase, chloroplastic (477 aa).

Residues 1 to 21 are disordered; it reads MAHLLSASCPSVISLSSSSSK. Residues 1-86 constitute a chloroplast transit peptide; sequence MAHLLSASCP…TNNSSSKPKR (86 aa). NAD(+) contacts are provided by residues 95–96, 115–119, 158–159, arginine 184, and asparagine 202; these read YC, DNLVR, and DI. Substrate is bound at residue arginine 184. Residues threonine 228 and tyrosine 265 each contribute to the substrate site. Threonine 228 is a catalytic residue. NAD(+) contacts are provided by tyrosine 265 and lysine 269. Residue tyrosine 265 is the Proton acceptor of the active site. Lysine 269 is a catalytic residue. A substrate-binding site is contributed by glutamine 292. Valine 295 serves as a coordination point for NAD(+). Substrate contacts are provided by residues 322–325, 337–339, and 410–412; these read ALNR, TVY, and RVE.

The protein belongs to the NAD(P)-dependent epimerase/dehydratase family. In terms of assembly, homodimer. The cofactor is NAD(+).

The protein localises to the plastid. Its subcellular location is the chloroplast. It catalyses the reaction sulfite + UDP-alpha-D-glucose + H(+) = UDP-alpha-D-6-sulfoquinovose + H2O. Its activity is regulated as follows. Concentrations above 100 uM sulfite inhibit the reaction. Functionally, involved in the biosynthesis of sulfolipids found in thylakoid membranes. Converts UDP-glucose and sulfite to the sulfolipid head group precursor UDP-sulfoquinovose. In Arabidopsis thaliana (Mouse-ear cress), this protein is UDP-sulfoquinovose synthase, chloroplastic (SQD1).